A 1031-amino-acid polypeptide reads, in one-letter code: MMS19 nucleotide excision repair protein homolog (1031 aa).

Ala-2 bears the N-acetylalanine mark. HEAT repeat units follow at residues 867 to 905 (QRFF…RLPK), 909 to 947 (LPEL…EAPQ), 950 to 988 (SLHV…LPTS), and 991 to 1029 (LPYK…LGSP). Phosphoserine is present on Ser-1028.

It belongs to the MET18/MMS19 family. Component of the CIA complex. In the CIA complex, interacts directly with CIAO2B and CIAO3. Component of the MMXD complex, composed of CIAO1, ERCC2, CIAO2B, MMS19 and SLC25A5. Interacts with CIAO2B; the interaction is direct. Interacts with ERCC2/XPD; the interaction is direct. Interacts with ERCC3/XPB and NCOA3/RAC3. Interacts with RTEL1; the interaction mediates the association of RTEL1 with the CIA complex. Interacts with BRIP1. Interacts with KIF4A; the interaction facilitates the transfer of Fe-S clusters to KIF4A to ensure proper localization of KIF4A to the mitotic machinery components. Interacts with CCDC117; the interaction is indirect. In terms of processing, ubiquitinated; undergoes 'Lys-48'-linked polyubiquitination. Ubiquitously expressed with higher expression in testis.

It is found in the nucleus. It localises to the cytoplasm. The protein resides in the cytoskeleton. The protein localises to the spindle. Functionally, key component of the cytosolic iron-sulfur protein assembly (CIA) complex, a multiprotein complex that mediates the incorporation of iron-sulfur cluster into apoproteins specifically involved in DNA metabolism and genomic integrity. In the CIA complex, MMS19 acts as an adapter between early-acting CIA components and a subset of cellular target Fe/S proteins such as ERCC2/XPD, FANCJ and RTEL1, thereby playing a key role in nucleotide excision repair (NER), homologous recombination-mediated double-strand break DNA repair, DNA replication and RNA polymerase II (POL II) transcription. As a CIA complex component and in collaboration with CIAO1 and CIAO2, binds to and facilitates the assembly of most cytosolic-nuclear Fe/S proteins. As part of the mitotic spindle-associated MMXD complex, plays a role in chromosome segregation, probably by facilitating iron-sulfur cluster assembly into ERCC2/XPD. Together with CIAO2, facilitates the transfer of Fe-S clusters to the motor protein KIF4A, which ensures proper localization of KIF4A to mitotic machinery components to promote the progression of mitosis. Indirectly acts as a transcriptional coactivator of estrogen receptor (ER), via its role in iron-sulfur insertion into some component of the TFIIH-machinery. The polypeptide is MMS19 nucleotide excision repair protein homolog (Mus musculus (Mouse)).